The sequence spans 857 residues: Autoinducer 2 sensor kinase/phosphatase LuxQ (857 aa).

Transmembrane regions (helical) follow at residues 20–40 (IIFL…YYFS) and 283–303 (LGLA…RSWI). In terms of domain architecture, Histidine kinase spans 490-712 (KMSHEIRTPL…TFYLSIPVEK (223 aa)). His-493 bears the Phosphohistidine; by autocatalysis mark. One can recognise a Response regulatory domain in the interval 735–850 (KVLLVEDNHT…ELHDELLHFK (116 aa)). A 4-aspartylphosphate modification is found at Asp-784.

Binds the complex formed by the autoinducer and LuxP.

Its subcellular location is the cell inner membrane. The enzyme catalyses ATP + protein L-histidine = ADP + protein N-phospho-L-histidine.. At low cell density, in absence of autoinducer has a kinase activity, and autophosphorylates on a histidine residue. The phosphoryl group is then transferred to an aspartate residue in the response regulator domain. The phosphoryl group is transferred to LuxU, and ultimately to LuxO. At high cell density, in the presence of autoinducer, the kinase activity is inactivated, and the response regulator domain has a phosphatase activity. In Vibrio vulnificus (strain YJ016), this protein is Autoinducer 2 sensor kinase/phosphatase LuxQ (luxQ).